The primary structure comprises 93 residues: MANATSFIALAYLLASALMTTVVLGNRQCVQAMDCTNVCSHGGLCTKNGKCVCWSPNVVINSGPPCWSDEMCFSTCGGNGGYCNYDIGGCFCQ.

Residues 1–25 form the signal peptide; the sequence is MANATSFIALAYLLASALMTTVVLG. 3 cysteine pairs are disulfide-bonded: Cys51/Cys83, Cys66/Cys90, and Cys72/Cys92.

This sequence belongs to the DEFL family.

The protein localises to the secreted. The chain is Putative defensin-like protein 282 from Arabidopsis thaliana (Mouse-ear cress).